Reading from the N-terminus, the 344-residue chain is MLQALLDSKDFLALTLANPETLGDEFSFALGEHTRVEVWDTGVIVFEPAQAQGKDVILSCGVHGNETAPIELCNTLIKQLLQQKIIAKQRTLFLIGNPLAINNGTRIIDENMNRLFSGEHSNPPGLVNPERVRAKKLEAYVDRFFKGAAAGRQRIHYDLHTAMRASKHEKFAIYPYRPGRAYSAEQIMFLAASGVDTVLFHHEPTTTFSYFSSEQYGADAFTIELGKVYPMGQNDMTRFIAAQEMFMRLITDKPLALEPFSADKVNLYQVCRVINKHFDDFEFTFATDVENFRSFPKGFVLAREGGQEIKVEQEFEAIVFPNAKVPIGNRTVICLIPSVAPDVR.

Zn(2+) is bound by residues histidine 63, glutamate 66, and histidine 160. Glutamate 224 is a catalytic residue.

It belongs to the AspA/AstE family. Succinylglutamate desuccinylase subfamily. Requires Zn(2+) as cofactor.

It carries out the reaction N-succinyl-L-glutamate + H2O = L-glutamate + succinate. It participates in amino-acid degradation; L-arginine degradation via AST pathway; L-glutamate and succinate from L-arginine: step 5/5. Functionally, transforms N(2)-succinylglutamate into succinate and glutamate. The sequence is that of Succinylglutamate desuccinylase from Shewanella sp. (strain MR-7).